The chain runs to 238 residues: Ethylene-responsive transcription factor ERN3 (238 aa).

Positions 24 to 81 (KFVGVRQRASGKWAAEIKDTSKNIRMWLGTYKTAEEAARAYDEAAFLLRGTNTRTNFS) form a DNA-binding region, AP2/ERF.

Belongs to the AP2/ERF transcription factor family. ERF subfamily. As to expression, expressed in roots, root hairs and leaves.

The protein resides in the nucleus. In terms of biological role, transcription factor involved in symbiotic nodule signaling in response to rhizobial Nod factors (NFs). Binds to the GCC box (NF-responsive box) of ENOD11 promoter. May act as transcriptional repressor of NF-responsive box-containing target gene promoters in root hairs. The protein is Ethylene-responsive transcription factor ERN3 of Medicago truncatula (Barrel medic).